Here is a 412-residue protein sequence, read N- to C-terminus: Argininosuccinate synthase (412 aa).

ATP-binding positions include 10–18 (AYSGGLDTS) and Ala36. L-citrulline contacts are provided by Tyr87 and Ser92. A Phosphotyrosine modification is found at Tyr87. Lys112 is modified (N6-acetyllysine). Residue Tyr113 is modified to Phosphotyrosine. Residue 115 to 123 (SHGATGKGN) coordinates ATP. Positions 119, 123, and 124 each coordinate L-aspartate. Asn123 contacts L-citrulline. Arg127 is an L-citrulline binding site. Residues Lys165 and Lys176 each carry the N6-acetyllysine; by CLOCK modification. Ser177 and Ser180 each carry phosphoserine. Positions 180 and 189 each coordinate L-citrulline. Thr219 bears the Phosphothreonine mark. Glu270 and Tyr282 together coordinate L-citrulline.

Belongs to the argininosuccinate synthase family. Type 1 subfamily. In terms of assembly, homotetramer. Interacts with NMRAL1. Interacts with CLOCK; in a circadian manner. Forms tissue-specific complexes with ASL, SLC7A1, HSP90AA1 and nitric oxide synthase NOS1, NOS2 or NOS3; the complex regulates cell-autonomous L-arginine synthesis and citrulline recycling while channeling extracellular L-arginine to nitric oxide synthesis pathway. Post-translationally, acetylated by CLOCK in a circadian manner which negatively regulates its enzyme activity. Deacetylated by histone deacetylases.

The protein resides in the cytoplasm. It localises to the cytosol. The enzyme catalyses L-citrulline + L-aspartate + ATP = 2-(N(omega)-L-arginino)succinate + AMP + diphosphate + H(+). The protein operates within amino-acid biosynthesis; L-arginine biosynthesis; L-arginine from L-ornithine and carbamoyl phosphate: step 2/3. Its pathway is nitrogen metabolism; urea cycle; (N(omega)-L-arginino)succinate from L-aspartate and L-citrulline: step 1/1. Functionally, one of the enzymes of the urea cycle, the metabolic pathway transforming neurotoxic amonia produced by protein catabolism into inocuous urea in the liver of ureotelic animals. Catalyzes the formation of arginosuccinate from aspartate, citrulline and ATP and together with ASL it is responsible for the biosynthesis of arginine in most body tissues. Indirectly, may be involved in the control of blood pressure. The sequence is that of Argininosuccinate synthase from Rattus norvegicus (Rat).